A 101-amino-acid chain; its full sequence is uncharacterized protein (101 aa).

3 helical membrane-spanning segments follow: residues 20–40 (KHFI…LLGL), 59–79 (GVIA…MYIA), and 81–101 (SEMW…ALFF).

It localises to the endoplasmic reticulum. It is found in the membrane. This is an uncharacterized protein from Saccharomyces cerevisiae (strain ATCC 204508 / S288c) (Baker's yeast).